The sequence spans 467 residues: Neurexin-1-beta (467 aa).

An N-terminal signal peptide occupies residues methionine 1–glycine 45. Topologically, residues alanine 46–threonine 391 are extracellular. One can recognise a Laminin G-like domain in the interval tyrosine 86–valine 284. Ca(2+) is bound by residues aspartate 136 and valine 153. Residue asparagine 183 is glycosylated (N-linked (GlcNAc...) asparagine). The tract at residues glycine 200–lysine 229 is essential for interaction with CBLN1; modulates interaction affinity with NLGN1, NLGN2 and NLGN3; prevents interaction with DAG1/alpha-dystroglycan; modulates interaction with alpha-latrotoxin. Residues isoleucine 235 and asparagine 237 each contribute to the Ca(2+) site. Residues leucine 318 to serine 380 form a disordered region. Residues arginine 324–aspartate 339 are compositionally biased toward polar residues. O-linked (Xyl...) (heparan sulfate) serine glycosylation is present at serine 345. Residues glycine 392–methionine 412 traverse the membrane as a helical segment. Residues tyrosine 413–valine 467 lie on the Cytoplasmic side of the membrane. The tract at residues asparagine 434–valine 467 is disordered. A phosphoserine mark is found at serine 449, serine 450, and serine 453.

The protein belongs to the neurexin family. As to quaternary structure, the cytoplasmic C-terminal region binds to CASK. Binds NLGN1, NLGN2 and NLGN3, DAG1 (alpha-dystroglycan) and alpha-latrotoxin. Binding to neuroligins is calcium-dependent, and the binding preference ranks as follow: NLGN1 &gt; NLGN4 &gt;&gt; NLGN3 &gt; NLGN2. Interacts with CBLN2 and more weakly with CBLN4. Interacts with CBLN1; interaction is CBLN1 hexamer form-dependent; CBLN1-binding is calcium-independent; isoform 1b does not interact with CBLN1. Interacts with CLSTN3. O-glycosylated; contains heparan sulfate. Heparan sulfate attachment is required for synapse development by mediating interactions with neuroligins.

It is found in the presynaptic cell membrane. Its function is as follows. Neuronal cell surface protein involved in cell recognition and cell adhesion by forming intracellular junctions through binding to neuroligins. Plays a role in formation of synaptic junctions. Functions as part of a trans-synaptic complex by binding to cerebellins and postsynaptic GRID1. This interaction helps regulate the activity of NMDA and AMPA receptors at hippocampal synapses without affecting synapse formation. NRXN1B-CBLN2-GRID1 complex transduce presynaptic signals into postsynaptic NMDAR response. In Bos taurus (Bovine), this protein is Neurexin-1-beta.